The chain runs to 457 residues: ATP synthase subunit beta (457 aa).

147-154 (GGAGVGKT) is a binding site for ATP.

Belongs to the ATPase alpha/beta chains family. In terms of assembly, F-type ATPases have 2 components, CF(1) - the catalytic core - and CF(0) - the membrane proton channel. CF(1) has five subunits: alpha(3), beta(3), gamma(1), delta(1), epsilon(1). CF(0) has three main subunits: a(1), b(2) and c(9-12). The alpha and beta chains form an alternating ring which encloses part of the gamma chain. CF(1) is attached to CF(0) by a central stalk formed by the gamma and epsilon chains, while a peripheral stalk is formed by the delta and b chains.

The protein localises to the cell inner membrane. The catalysed reaction is ATP + H2O + 4 H(+)(in) = ADP + phosphate + 5 H(+)(out). Functionally, produces ATP from ADP in the presence of a proton gradient across the membrane. The catalytic sites are hosted primarily by the beta subunits. The sequence is that of ATP synthase subunit beta from Actinobacillus pleuropneumoniae serotype 5b (strain L20).